Reading from the N-terminus, the 247-residue chain is Cell division protein ZapD (247 aa).

It belongs to the ZapD family. Interacts with FtsZ.

It is found in the cytoplasm. Its function is as follows. Cell division factor that enhances FtsZ-ring assembly. Directly interacts with FtsZ and promotes bundling of FtsZ protofilaments, with a reduction in FtsZ GTPase activity. This is Cell division protein ZapD from Escherichia fergusonii (strain ATCC 35469 / DSM 13698 / CCUG 18766 / IAM 14443 / JCM 21226 / LMG 7866 / NBRC 102419 / NCTC 12128 / CDC 0568-73).